Consider the following 217-residue polypeptide: Probable GTP-binding protein EngB (217 aa).

The EngB-type G domain occupies 27–201 (EGIEVAFAGR…REKLDTWFSE (175 aa)). Residues 35–42 (GRSNAGKS), 62–66 (GRTQL), 80–83 (DLPG), 147–150 (TKAD), and 180–182 (FSS) contribute to the GTP site. Residues Ser-42 and Thr-64 each contribute to the Mg(2+) site.

The protein belongs to the TRAFAC class TrmE-Era-EngA-EngB-Septin-like GTPase superfamily. EngB GTPase family. Requires Mg(2+) as cofactor.

Necessary for normal cell division and for the maintenance of normal septation. This is Probable GTP-binding protein EngB from Yersinia enterocolitica serotype O:8 / biotype 1B (strain NCTC 13174 / 8081).